A 131-amino-acid polypeptide reads, in one-letter code: Small ribosomal subunit protein uS8 (131 aa).

The protein belongs to the universal ribosomal protein uS8 family. Part of the 30S ribosomal subunit. Contacts proteins S5 and S12.

Functionally, one of the primary rRNA binding proteins, it binds directly to 16S rRNA central domain where it helps coordinate assembly of the platform of the 30S subunit. This is Small ribosomal subunit protein uS8 from Sulfurimonas denitrificans (strain ATCC 33889 / DSM 1251) (Thiomicrospira denitrificans (strain ATCC 33889 / DSM 1251)).